We begin with the raw amino-acid sequence, 517 residues long: Bifunctional purine biosynthesis protein PurH (517 aa).

One can recognise an MGS-like domain in the interval 1–145 (MSPLALVSVS…KNHADVAVLV (145 aa)).

This sequence belongs to the PurH family.

It carries out the reaction (6R)-10-formyltetrahydrofolate + 5-amino-1-(5-phospho-beta-D-ribosyl)imidazole-4-carboxamide = 5-formamido-1-(5-phospho-D-ribosyl)imidazole-4-carboxamide + (6S)-5,6,7,8-tetrahydrofolate. The catalysed reaction is IMP + H2O = 5-formamido-1-(5-phospho-D-ribosyl)imidazole-4-carboxamide. It participates in purine metabolism; IMP biosynthesis via de novo pathway; 5-formamido-1-(5-phospho-D-ribosyl)imidazole-4-carboxamide from 5-amino-1-(5-phospho-D-ribosyl)imidazole-4-carboxamide (10-formyl THF route): step 1/1. It functions in the pathway purine metabolism; IMP biosynthesis via de novo pathway; IMP from 5-formamido-1-(5-phospho-D-ribosyl)imidazole-4-carboxamide: step 1/1. In Prochlorococcus marinus (strain MIT 9515), this protein is Bifunctional purine biosynthesis protein PurH.